The sequence spans 246 residues: Putative outer membrane protein YiaT (246 aa).

The first 21 residues, 1 to 21 (MLINRNIVALFALPFMASATA), serve as a signal peptide directing secretion.

It belongs to the MipA/OmpV family.

It localises to the cell outer membrane. The chain is Putative outer membrane protein YiaT (yiaT) from Escherichia coli O157:H7.